A 450-amino-acid polypeptide reads, in one-letter code: Glucose-6-phosphate isomerase (450 aa).

The Proton donor role is filled by Glu-291. Active-site residues include His-312 and Lys-426.

The protein belongs to the GPI family.

Its subcellular location is the cytoplasm. The catalysed reaction is alpha-D-glucose 6-phosphate = beta-D-fructose 6-phosphate. Its pathway is carbohydrate biosynthesis; gluconeogenesis. It participates in carbohydrate degradation; glycolysis; D-glyceraldehyde 3-phosphate and glycerone phosphate from D-glucose: step 2/4. Functionally, catalyzes the reversible isomerization of glucose-6-phosphate to fructose-6-phosphate. This Clostridium perfringens (strain SM101 / Type A) protein is Glucose-6-phosphate isomerase.